The following is a 343-amino-acid chain: L-rhamnose-proton symporter (343 aa).

10 helical membrane passes run 4 to 24 (AIIL…CFYA), 38 to 58 (WSIG…YLLL), 68 to 88 (FSIA…IGNI), 101 to 121 (MGIG…TPIL), 137 to 157 (TLLG…AGLL), 175 to 195 (LILA…MDAA), 207 to 227 (INSL…GAII), 254 to 274 (LLIT…LQFF), 289 to 309 (MSWM…GLLL), and 320 to 340 (VAVL…VGLG).

The protein belongs to the L-rhamnose transporter (TC 2.A.7.6) family.

The protein localises to the cell inner membrane. It carries out the reaction L-rhamnopyranose(in) + H(+)(in) = L-rhamnopyranose(out) + H(+)(out). In terms of biological role, uptake of L-rhamnose across the cytoplasmic membrane with the concomitant transport of protons into the cell (symport system). In Yersinia pestis bv. Antiqua (strain Antiqua), this protein is L-rhamnose-proton symporter.